A 101-amino-acid chain; its full sequence is Small integral membrane protein 21 (101 aa).

The helical transmembrane segment at 49 to 65 (HIRFFTLLVLFHVMVLL) threads the bilayer.

Its subcellular location is the membrane. This is Small integral membrane protein 21 (SMIM21) from Homo sapiens (Human).